We begin with the raw amino-acid sequence, 209 residues long: UPF0502 protein mll4256 (209 aa).

Belongs to the UPF0502 family.

This is UPF0502 protein mll4256 from Mesorhizobium japonicum (strain LMG 29417 / CECT 9101 / MAFF 303099) (Mesorhizobium loti (strain MAFF 303099)).